The chain runs to 123 residues: Small ribosomal subunit protein uS12 (123 aa).

Asp-89 carries the post-translational modification 3-methylthioaspartic acid.

It belongs to the universal ribosomal protein uS12 family. Part of the 30S ribosomal subunit. Contacts proteins S8 and S17. May interact with IF1 in the 30S initiation complex.

With S4 and S5 plays an important role in translational accuracy. In terms of biological role, interacts with and stabilizes bases of the 16S rRNA that are involved in tRNA selection in the A site and with the mRNA backbone. Located at the interface of the 30S and 50S subunits, it traverses the body of the 30S subunit contacting proteins on the other side and probably holding the rRNA structure together. The combined cluster of proteins S8, S12 and S17 appears to hold together the shoulder and platform of the 30S subunit. The sequence is that of Small ribosomal subunit protein uS12 from Prochlorococcus marinus (strain MIT 9211).